The primary structure comprises 263 residues: MFDIGLNITSSQFDHDRDEMIARARAAGVDSMLFTGTSLEESDRACAFARRYAGCWSTAGVHPHDASTWNDESAARLRALASEPEVVAIGECGLDFNRNFSTPAEQEHAFTEQLRLAAALALPVFLHCRDAHARFLALLDPWLDKLPGAVLHCFTGTEQEARECLARGMYLGITGWVCDERRGLELRALLPIIPADRLLLETDAPYLLPRDLTPKPASRRNEPCWLPHILTQVAQWRGEDPAWLEAATDANAARLFLKNASPA.

Glutamate 91, histidine 127, and histidine 152 together coordinate a divalent metal cation.

Belongs to the metallo-dependent hydrolases superfamily. TatD-type hydrolase family. TatD subfamily. In terms of assembly, monomer. Mg(2+) is required as a cofactor.

The protein localises to the cytoplasm. Its function is as follows. 3'-5' exonuclease that prefers single-stranded DNA and RNA. May play a role in the H(2)O(2)-induced DNA damage repair. The polypeptide is 3'-5' ssDNA/RNA exonuclease TatD (Cronobacter turicensis (strain DSM 18703 / CCUG 55852 / LMG 23827 / z3032)).